Reading from the N-terminus, the 932-residue chain is Protein translocase subunit SecA (932 aa).

ATP contacts are provided by residues Gln-87, 105–109, and Asp-515; that span reads GEGKT. Residues Cys-916, Cys-918, Cys-927, and His-928 each coordinate Zn(2+).

This sequence belongs to the SecA family. In terms of assembly, monomer and homodimer. Part of the essential Sec protein translocation apparatus which comprises SecA, SecYEG and auxiliary proteins SecDF-YajC and YidC. It depends on Zn(2+) as a cofactor.

It is found in the cell inner membrane. The protein localises to the cytoplasm. The enzyme catalyses ATP + H2O + cellular proteinSide 1 = ADP + phosphate + cellular proteinSide 2.. Functionally, part of the Sec protein translocase complex. Interacts with the SecYEG preprotein conducting channel. Has a central role in coupling the hydrolysis of ATP to the transfer of proteins into and across the cell membrane, serving both as a receptor for the preprotein-SecB complex and as an ATP-driven molecular motor driving the stepwise translocation of polypeptide chains across the membrane. The protein is Protein translocase subunit SecA of Burkholderia multivorans (strain ATCC 17616 / 249).